A 949-amino-acid chain; its full sequence is MSEYKDTLNLPETGFPMRGDLAKREPEMLQRWYQEDLYGAIRQAKKGKKSFVLHDGPPYANGDIHIGHALNKILKDVIIKSKTLSGFDAPYIPGWDCHGLPIELMVEKKVGKPGQKVTAAEFREKCREYAAGQVEGQKESFKRLGILGEWDKPYRTMDFVTEANIIRALGKIADNGHLLKGFKPVHWCTDCGSALAEAEVEYKNKVSPSIDVRFKAADEAAVLAKFGLAAGHEGKGDVSIVIWTTTPWTLPANRAVCLRADLEYVLIQVEGEQPERIIVASELAKSVMDRAGIEHFHNLGFATGADLELVQFQHPFYSFTVPAILGDHVTTDSGTGVVHTAPGHGQEDFAVGQQYGLEVANPVGSNGVYLPDTELFAGQHVFKANDSVLEVLKEKGALLHHHAYEHSYPHCWRHKTPIIFRATPQWFVSMEQAGLREQALTAIKGVHWMPDWGQSRIEGMVAGRPEWCISRQRTWGVPIALFVHKETAELHPNSADLIEKVAQLVEQKGIQAWWDLDTAELLGAEDAANYEKVLDTLDVWFDSGVTHSAVVDARQEFNGAEADMYLEGSDQHRGWFQSSLISSVAMKSKAPYKEVLTHGFVVDGQGRKMSKSIGNVVAPQDVTNKLGADILRLWVASTDYTGEVAVSDEILKRSADAYRRIRNTARFFLANLNGFNPTTDIIPVEDMVALDRWAVGRALAAQQEIIQAYQDYNLHAVVQRLMNFCSIEMGSFYLDVIKDRQYTAKRGGHAQRSCQTALFFIVEALVRWMAPIMSFTADEIWNAMPAQQADGSARDKFVFTTEWFDGLFGLAEGEELNNAFWNDIQKVRGSVNKLLENARNEKLIGGSLQAELVLFADDALASKLAKLGDELRFVLLTSKAVVKPLAEKSEAAQATDIDGLFVQVNKTEAEKCDRCWHHTPDVGTIAGHTTICGRCVSNVEGEGEVRKFA.

Residues 58–68 carry the 'HIGH' region motif; that stretch reads PYANGDIHIGH. E567 contributes to the L-isoleucyl-5'-AMP binding site. A 'KMSKS' region motif is present at residues 608–612; the sequence is KMSKS. Residue K611 coordinates ATP. C912, C915, C932, and C935 together coordinate Zn(2+).

Belongs to the class-I aminoacyl-tRNA synthetase family. IleS type 1 subfamily. As to quaternary structure, monomer. It depends on Zn(2+) as a cofactor.

It localises to the cytoplasm. It catalyses the reaction tRNA(Ile) + L-isoleucine + ATP = L-isoleucyl-tRNA(Ile) + AMP + diphosphate. In terms of biological role, catalyzes the attachment of isoleucine to tRNA(Ile). As IleRS can inadvertently accommodate and process structurally similar amino acids such as valine, to avoid such errors it has two additional distinct tRNA(Ile)-dependent editing activities. One activity is designated as 'pretransfer' editing and involves the hydrolysis of activated Val-AMP. The other activity is designated 'posttransfer' editing and involves deacylation of mischarged Val-tRNA(Ile). In Vibrio cholerae serotype O1 (strain ATCC 39541 / Classical Ogawa 395 / O395), this protein is Isoleucine--tRNA ligase.